The primary structure comprises 500 residues: Na(+)/H(+) antiporter NhaB (500 aa).

A run of 12 helical transmembrane segments spans residues 28–50, 68–88, 98–118, 121–141, 145–165, 205–225, 244–264, 301–318, 350–370, 394–414, 449–469, and 477–497; these read FLLS…VLVG, GGLL…ALYA, LLLM…LLLF, LLLG…LAAL, FLDA…FFAV, LLMH…VGEP, QVAP…VALE, ALLV…GLAL, FQEA…VAVI, MLFI…VATI, VATP…IAPL, and MVWM…WAVS.

The protein belongs to the NhaB Na(+)/H(+) (TC 2.A.34) antiporter family.

The protein localises to the cell inner membrane. The catalysed reaction is 2 Na(+)(in) + 3 H(+)(out) = 2 Na(+)(out) + 3 H(+)(in). Functionally, na(+)/H(+) antiporter that extrudes sodium in exchange for external protons. The protein is Na(+)/H(+) antiporter NhaB of Pseudomonas paraeruginosa (strain DSM 24068 / PA7) (Pseudomonas aeruginosa (strain PA7)).